Reading from the N-terminus, the 189-residue chain is MSEIKMPEFLTVESALKDSGLAVTPSELHGLLVGMISGGLSLDDQTWKPLIYDYTNDGMGWPDSAIKVGSAVFQCTVAELTAEKLALELLIPSEKESLMNRADGLSEWVNHFISGLGLVELKLDKTSDALKEALADLEEIARLGIDEDDDLEEQENLFEQIVEHVRICVLTIHAELGQQIHTDASKTVH.

Belongs to the UPF0149 family.

The sequence is that of UPF0149 protein VFMJ11_2207 from Aliivibrio fischeri (strain MJ11) (Vibrio fischeri).